We begin with the raw amino-acid sequence, 399 residues long: Nicotinate phosphoribosyltransferase (399 aa).

Histidine 217 bears the Phosphohistidine; by autocatalysis mark.

The protein belongs to the NAPRTase family. Transiently phosphorylated on a His residue during the reaction cycle. Phosphorylation strongly increases the affinity for substrates and increases the rate of nicotinate D-ribonucleotide production. Dephosphorylation regenerates the low-affinity form of the enzyme, leading to product release.

The enzyme catalyses nicotinate + 5-phospho-alpha-D-ribose 1-diphosphate + ATP + H2O = nicotinate beta-D-ribonucleotide + ADP + phosphate + diphosphate. It functions in the pathway cofactor biosynthesis; NAD(+) biosynthesis; nicotinate D-ribonucleotide from nicotinate: step 1/1. Catalyzes the synthesis of beta-nicotinate D-ribonucleotide from nicotinate and 5-phospho-D-ribose 1-phosphate at the expense of ATP. The protein is Nicotinate phosphoribosyltransferase of Burkholderia mallei (strain ATCC 23344).